Consider the following 211-residue polypeptide: ATP phosphoribosyltransferase (211 aa).

The protein belongs to the ATP phosphoribosyltransferase family. Short subfamily. In terms of assembly, heteromultimer composed of HisG and HisZ subunits.

It localises to the cytoplasm. The catalysed reaction is 1-(5-phospho-beta-D-ribosyl)-ATP + diphosphate = 5-phospho-alpha-D-ribose 1-diphosphate + ATP. It functions in the pathway amino-acid biosynthesis; L-histidine biosynthesis; L-histidine from 5-phospho-alpha-D-ribose 1-diphosphate: step 1/9. In terms of biological role, catalyzes the condensation of ATP and 5-phosphoribose 1-diphosphate to form N'-(5'-phosphoribosyl)-ATP (PR-ATP). Has a crucial role in the pathway because the rate of histidine biosynthesis seems to be controlled primarily by regulation of HisG enzymatic activity. The polypeptide is ATP phosphoribosyltransferase (Pseudomonas putida (strain W619)).